The chain runs to 386 residues: Ribosomal RNA small subunit methyltransferase H (386 aa).

S-adenosyl-L-methionine-binding positions include 97 to 99 (GGH), aspartate 116, tyrosine 143, aspartate 167, and glutamine 174.

The protein belongs to the methyltransferase superfamily. RsmH family.

It localises to the cytoplasm. It carries out the reaction cytidine(1402) in 16S rRNA + S-adenosyl-L-methionine = N(4)-methylcytidine(1402) in 16S rRNA + S-adenosyl-L-homocysteine + H(+). Specifically methylates the N4 position of cytidine in position 1402 (C1402) of 16S rRNA. This Mycobacterium avium (strain 104) protein is Ribosomal RNA small subunit methyltransferase H.